Consider the following 142-residue polypeptide: Small ribosomal subunit protein uS9c (142 aa).

It belongs to the universal ribosomal protein uS9 family.

It is found in the plastid. The protein resides in the chloroplast. In Stigeoclonium helveticum (Green alga), this protein is Small ribosomal subunit protein uS9c (rps9).